The primary structure comprises 241 residues: Ribonuclease PH (241 aa).

Phosphate contacts are provided by residues arginine 89 and 127–129; that span reads GTR.

The protein belongs to the RNase PH family. As to quaternary structure, homohexameric ring arranged as a trimer of dimers.

It carries out the reaction tRNA(n+1) + phosphate = tRNA(n) + a ribonucleoside 5'-diphosphate. Its function is as follows. Phosphorolytic 3'-5' exoribonuclease that plays an important role in tRNA 3'-end maturation. Removes nucleotide residues following the 3'-CCA terminus of tRNAs; can also add nucleotides to the ends of RNA molecules by using nucleoside diphosphates as substrates, but this may not be physiologically important. Probably plays a role in initiation of 16S rRNA degradation (leading to ribosome degradation) during starvation. The chain is Ribonuclease PH from Xanthomonas oryzae pv. oryzae (strain MAFF 311018).